We begin with the raw amino-acid sequence, 106 residues long: UPF0060 membrane protein Smed_0659 (106 aa).

The next 3 membrane-spanning stretches (helical) occupy residues 4–24, 31–51, and 61–81; these read FAIY…FWAW, GLWL…LTMV, and AAYG…AEGA.

It belongs to the UPF0060 family.

The protein resides in the cell inner membrane. This chain is UPF0060 membrane protein Smed_0659, found in Sinorhizobium medicae (strain WSM419) (Ensifer medicae).